Reading from the N-terminus, the 83-residue chain is Small ribosomal subunit protein bS16 (83 aa).

Belongs to the bacterial ribosomal protein bS16 family.

In Pseudomonas aeruginosa (strain LESB58), this protein is Small ribosomal subunit protein bS16.